The chain runs to 317 residues: Ribosomal protein L11 methyltransferase (317 aa).

T158, G179, D201, and N244 together coordinate S-adenosyl-L-methionine.

The protein belongs to the methyltransferase superfamily. PrmA family.

It is found in the cytoplasm. The enzyme catalyses L-lysyl-[protein] + 3 S-adenosyl-L-methionine = N(6),N(6),N(6)-trimethyl-L-lysyl-[protein] + 3 S-adenosyl-L-homocysteine + 3 H(+). In terms of biological role, methylates ribosomal protein L11. The protein is Ribosomal protein L11 methyltransferase of Streptococcus pyogenes serotype M1.